Here is an 888-residue protein sequence, read N- to C-terminus: Alanine--tRNA ligase (888 aa).

The Zn(2+) site is built by His-564, His-568, Cys-676, and His-680.

Belongs to the class-II aminoacyl-tRNA synthetase family. Zn(2+) serves as cofactor.

The protein localises to the cytoplasm. The catalysed reaction is tRNA(Ala) + L-alanine + ATP = L-alanyl-tRNA(Ala) + AMP + diphosphate. Functionally, catalyzes the attachment of alanine to tRNA(Ala) in a two-step reaction: alanine is first activated by ATP to form Ala-AMP and then transferred to the acceptor end of tRNA(Ala). Also edits incorrectly charged Ser-tRNA(Ala) and Gly-tRNA(Ala) via its editing domain. The chain is Alanine--tRNA ligase from Mesorhizobium japonicum (strain LMG 29417 / CECT 9101 / MAFF 303099) (Mesorhizobium loti (strain MAFF 303099)).